The chain runs to 332 residues: Biotin synthase (332 aa).

A Radical SAM core domain is found at 53–283 (WGKGGIHACS…VHPHSIIKFA (231 aa)). [4Fe-4S] cluster contacts are provided by Cys-71, Cys-75, and Cys-78. The [2Fe-2S] cluster site is built by Cys-150, Cys-211, and Lys-281.

It belongs to the radical SAM superfamily. Biotin synthase family. As to quaternary structure, homodimer. Requires [4Fe-4S] cluster as cofactor. [2Fe-2S] cluster is required as a cofactor.

It carries out the reaction (4R,5S)-dethiobiotin + (sulfur carrier)-SH + 2 reduced [2Fe-2S]-[ferredoxin] + 2 S-adenosyl-L-methionine = (sulfur carrier)-H + biotin + 2 5'-deoxyadenosine + 2 L-methionine + 2 oxidized [2Fe-2S]-[ferredoxin]. It functions in the pathway cofactor biosynthesis; biotin biosynthesis; biotin from 7,8-diaminononanoate: step 2/2. Its function is as follows. Catalyzes the conversion of dethiobiotin (DTB) to biotin by the insertion of a sulfur atom into dethiobiotin via a radical-based mechanism. The polypeptide is Biotin synthase (Chlorobium phaeovibrioides (strain DSM 265 / 1930) (Prosthecochloris vibrioformis (strain DSM 265))).